The primary structure comprises 833 residues: DNA polymerase I, thermostable (833 aa).

The 5'-3' exonuclease domain occupies 173–267 (VPPERWVDFR…FKALRRRTPD (95 aa)). A polymerase region spans residues 412–833 (ERLFQNLFPR…GRDWLEAKQD (422 aa)).

It belongs to the DNA polymerase type-A family.

The catalysed reaction is DNA(n) + a 2'-deoxyribonucleoside 5'-triphosphate = DNA(n+1) + diphosphate. In addition to polymerase activity, this DNA polymerase exhibits 5'-3' exonuclease activity. Unlikely to have 3'-5' exonuclease activity due to absence of a 3'-5' exonuclease domain. This is DNA polymerase I, thermostable (polA) from Thermus filiformis.